The chain runs to 196 residues: Calmodulin-like protein 4 (196 aa).

The segment at 1–43 (MAAEHLLPGPPPSLADFRLEAGGKGTERGSGSSKPTGSSRGPR) is disordered. A compositionally biased stretch (basic and acidic residues) spans 17 to 27 (FRLEAGGKGTE). Residues 29–39 (GSGSSKPTGSS) show a composition bias toward polar residues. 4 EF-hand domains span residues 51 to 86 (DQINEYKECFSLYDKQQRGKIKATDLMVAMRCLGAS), 87 to 122 (PTPGEVQRHLQTHGIDGNGELDFSTFLTIMHMQIKQ), 124 to 159 (DPKKEILLAMLMVDKEKKGYVMASDLRSKLTSLGEK), and 160 to 195 (LTHKEVDDLFREADIEPNGKVKYDEFIHKITLPGRD).

It belongs to the calmodulin family. As to quaternary structure, interacts with MYO7B; the interaction mediates the association of CALML4 with the IMAC/intermicrovillar adhesion complex. Interacts with MYO7A. Expressed in the intestinal tract. In terms of tissue distribution, dominant transcript in the intestinal tract.

It localises to the cell projection. The protein localises to the microvillus. In terms of biological role, as part of the intermicrovillar adhesion complex/IMAC plays a role in epithelial brush border differentiation, controlling microvilli organization and length. Acts as a light chain for MYO7B and is required for efficient targeting of the IMAC to the tips of border brush microvilli. In Homo sapiens (Human), this protein is Calmodulin-like protein 4.